The sequence spans 218 residues: Oxidoreductase claN (218 aa).

The NADP(+) site is built by Lys-38, Asp-57, and Asn-82. The Proton donor role is filled by Ser-134. 3 residues coordinate NADP(+): Tyr-148, Lys-152, and Thr-183. The Proton acceptor role is filled by Tyr-148. The Lowers pKa of active site Tyr role is filled by Lys-152.

It belongs to the short-chain dehydrogenases/reductases (SDR) family.

Its pathway is pigment biosynthesis. Oxidoreductase; part of the gene cluster that mediates the biosynthesis of the bianthraquinone cladofulvin, a conidial pigment not required for virulence but that plays a role in fitness and resistance to environmental stresses including UV light and low-temperature stress. The pathway begins with the synthesis of atrochrysone thioester by the polyketide synthase (PKS) claG. The atrochrysone carboxyl ACP thioesterase claF then breaks the thioester bond and releases the atrochrysone carboxylic acid from claG. This compound is decarboxylated by claH to yield emodin, which is further converted to chrysophanol hydroquinone by the reductase claC and the dehydratase claB. The cytochrome P450 monooxygenase claM then catalyzes the dimerization of nataloe-emodin to cladofulvin. The polypeptide is Oxidoreductase claN (Passalora fulva (Tomato leaf mold)).